Consider the following 560-residue polypeptide: Calnexin homolog (560 aa).

A signal peptide spans 1–22 (MKYGKVSFLALLCSLYVRGSLA). Residues 23–489 (DPESEQEPLV…ETIIETPEIG (467 aa)) lie on the Lumenal side of the membrane. An intrachain disulfide couples Cys-132 to Cys-163. 4 residues coordinate an alpha-D-glucoside: Tyr-136, Lys-138, Tyr-154, and Asp-161. Positions 242–375 (IYDPEDIKPA…RKIPNPDYFD (134 aa)) are p domain (Extended arm). Tandem repeats lie at residues 244-255 (DPEDIKPADWVD), 261-272 (DPNAVKPDDWDE), 280-291 (DPDAVKPEDWLE), 299-310 (DPEAQKPEDWDD), and 314-324 (GDWIPSEIINP). 2 4 X approximate repeats regions span residues 244 to 310 (DPED…DWDD) and 314 to 371 (GDWI…IPNP). The segment at 253-273 (WVDEPEIPDPNAVKPDDWDED) is disordered. A disulfide bridge connects residues Cys-326 and Cys-332. 3 consecutive repeat copies span residues 333-343 (GEWKPPMIRNP), 347-357 (GPWSPPMIPNP), and 361-371 (GEWYPRKIPNP). Residue Glu-391 coordinates an alpha-D-glucoside. Asn-418 is a glycosylation site (N-linked (GlcNAc...) asparagine). A helical membrane pass occupies residues 490–512 (IAIVAVLGSLTAVILTCYFYFFA). The Cytoplasmic portion of the chain corresponds to 513-560 (SSSPASLSTGTTEAEKEQQEKFKQETETEKIDVSYAPETESPTAKNED). A disordered region spans residues 517 to 560 (ASLSTGTTEAEKEQQEKFKQETETEKIDVSYAPETESPTAKNED). Residues 525 to 544 (EAEKEQQEKFKQETETEKID) show a composition bias toward basic and acidic residues. Thr-551 is subject to Phosphothreonine. Residue Ser-553 is modified to Phosphoserine. Thr-555 carries the post-translational modification Phosphothreonine.

Belongs to the calreticulin family.

Its subcellular location is the endoplasmic reticulum membrane. In terms of biological role, calcium-binding protein that interacts with newly synthesized monoglucosylated glycoproteins in the endoplasmic reticulum. It may act in assisting protein assembly and/or in the retention within the ER of unassembled protein subunits. It seems to play a major role in the quality control apparatus of the ER by the retention of incorrectly folded proteins. The sequence is that of Calnexin homolog (cal1) from Schizosaccharomyces pombe (strain 972 / ATCC 24843) (Fission yeast).